A 241-amino-acid polypeptide reads, in one-letter code: ATP synthase subunit a (241 aa).

Helical transmembrane passes span 29–49 (NSSL…LLGV), 86–106 (IPLV…GMLP), 114–134 (HVIV…IVGF), 144–164 (ILLP…IKLF), 177–197 (LAAN…FIMN), 200–220 (LILT…EVFV), and 221–241 (AILQ…DAVK).

This sequence belongs to the ATPase A chain family. In terms of assembly, F-type ATPases have 2 components, CF(1) - the catalytic core - and CF(0) - the membrane proton channel. CF(1) has five subunits: alpha(3), beta(3), gamma(1), delta(1), epsilon(1). CF(0) has three main subunits: a(1), b(2) and c(9-12). The alpha and beta chains form an alternating ring which encloses part of the gamma chain. CF(1) is attached to CF(0) by a central stalk formed by the gamma and epsilon chains, while a peripheral stalk is formed by the delta and b chains.

Its subcellular location is the cell membrane. Key component of the proton channel; it plays a direct role in the translocation of protons across the membrane. The sequence is that of ATP synthase subunit a from Wolbachia sp. subsp. Brugia malayi (strain TRS).